The following is a 210-amino-acid chain: Imidazoleglycerol-phosphate dehydratase (210 aa).

The protein belongs to the imidazoleglycerol-phosphate dehydratase family.

The enzyme catalyses D-erythro-1-(imidazol-4-yl)glycerol 3-phosphate = 3-(imidazol-4-yl)-2-oxopropyl phosphate + H2O. Its pathway is amino-acid biosynthesis; L-histidine biosynthesis; L-histidine from 5-phospho-alpha-D-ribose 1-diphosphate: step 6/9. This chain is Imidazoleglycerol-phosphate dehydratase (HIS3), found in Candida glabrata (strain ATCC 2001 / BCRC 20586 / JCM 3761 / NBRC 0622 / NRRL Y-65 / CBS 138) (Yeast).